The chain runs to 167 residues: Cofilin-2 (167 aa).

The ADF-H domain occupies 4–153 (GVTVNDEVIK…KDRCTLADKL (150 aa)). The short motif at 30–34 (KKRKK) is the Nuclear localization signal element.

This sequence belongs to the actin-binding proteins ADF family.

It is found in the nucleus matrix. It localises to the cytoplasm. The protein resides in the cytoskeleton. Its function is as follows. Controls reversibly actin polymerization and depolymerization in a pH-sensitive manner. It has the ability to bind G- and F-actin in a 1:1 ratio of cofilin to actin. It is the major component of intranuclear and cytoplasmic actin rods. In Xenopus tropicalis (Western clawed frog), this protein is Cofilin-2 (cfl2).